The chain runs to 259 residues: Tubulin-specific chaperone C (259 aa).

Residues 112–241 (PEVYFENDTL…DEHPILDFTW (130 aa)) enclose the C-CAP/cofactor C-like domain.

It belongs to the TBCC family.

The protein localises to the cytoplasm. It is found in the cytoskeleton. Its function is as follows. Tubulin-folding protein; involved in the final step of the tubulin folding pathway. This chain is Tubulin-specific chaperone C (cin2), found in Schizosaccharomyces pombe (strain 972 / ATCC 24843) (Fission yeast).